The sequence spans 151 residues: UPF0336 protein Franean1_6066 (151 aa).

In terms of domain architecture, MaoC-like spans V8–F127.

Belongs to the UPF0336 family.

In Parafrankia sp. (strain EAN1pec), this protein is UPF0336 protein Franean1_6066.